The chain runs to 544 residues: Protein nucleotidyltransferase YdiU (544 aa).

Residues Gly-133, Gly-135, Arg-136, Lys-155, Asp-167, Gly-168, Arg-218, and Arg-225 each contribute to the ATP site. Asp-294 functions as the Proton acceptor in the catalytic mechanism. Mg(2+) is bound by residues Asn-295 and Asp-304. Asp-304 contacts ATP.

The protein belongs to the SELO family. The cofactor is Mg(2+). Mn(2+) is required as a cofactor.

It carries out the reaction L-seryl-[protein] + ATP = 3-O-(5'-adenylyl)-L-seryl-[protein] + diphosphate. The catalysed reaction is L-threonyl-[protein] + ATP = 3-O-(5'-adenylyl)-L-threonyl-[protein] + diphosphate. The enzyme catalyses L-tyrosyl-[protein] + ATP = O-(5'-adenylyl)-L-tyrosyl-[protein] + diphosphate. It catalyses the reaction L-histidyl-[protein] + UTP = N(tele)-(5'-uridylyl)-L-histidyl-[protein] + diphosphate. It carries out the reaction L-seryl-[protein] + UTP = O-(5'-uridylyl)-L-seryl-[protein] + diphosphate. The catalysed reaction is L-tyrosyl-[protein] + UTP = O-(5'-uridylyl)-L-tyrosyl-[protein] + diphosphate. Functionally, nucleotidyltransferase involved in the post-translational modification of proteins. It can catalyze the addition of adenosine monophosphate (AMP) or uridine monophosphate (UMP) to a protein, resulting in modifications known as AMPylation and UMPylation. This is Protein nucleotidyltransferase YdiU from Cupriavidus metallidurans (strain ATCC 43123 / DSM 2839 / NBRC 102507 / CH34) (Ralstonia metallidurans).